A 262-amino-acid polypeptide reads, in one-letter code: 2-oxo-tetronate isomerase (262 aa).

Residue E143 is the Proton donor/acceptor of the active site. The Mg(2+) site is built by E143, D178, Q204, and E240. E240 serves as the catalytic Proton donor/acceptor.

Belongs to the hyi family. OtnI subfamily.

The enzyme catalyses 2-dehydro-L-erythronate = 3-dehydro-L-erythronate. It carries out the reaction 2-dehydro-D-erythronate = 3-dehydro-D-erythronate. Functionally, catalyzes the isomerization of 2-oxo-tetronate to 3-oxo-tetronate. This Pectobacterium atrosepticum (strain SCRI 1043 / ATCC BAA-672) (Erwinia carotovora subsp. atroseptica) protein is 2-oxo-tetronate isomerase.